Here is a 380-residue protein sequence, read N- to C-terminus: Probable RAD2-like endonuclease 076L (380 aa).

The segment at 1–101 (MGIKNLTQFL…QKIVSKTDAI (101 aa)) is N-domain. Residues Asp-32, Glu-73, Glu-191, Glu-193, Asp-212, Asp-214, and Asp-281 each contribute to the Mg(2+) site. An I-domain region spans residues 156–301 (IDRRRKYEFS…EKAYKYISDY (146 aa)).

Belongs to the XPG/RAD2 endonuclease family. It depends on Mg(2+) as a cofactor.

It is found in the host nucleus. Its function is as follows. Probable endonuclease. This Invertebrate iridescent virus 3 (IIV-3) protein is Probable RAD2-like endonuclease 076L.